Here is a 327-residue protein sequence, read N- to C-terminus: Undecaprenyl-phosphate 4-deoxy-4-formamido-L-arabinose transferase (327 aa).

Topologically, residues 1–235 (MFDAAPIKKV…TCLTTTPLRL (235 aa)) are cytoplasmic. Residues 236–256 (LSLLGSVIAIGGFSLSVLLIV) form a helical membrane-spanning segment. Residues 257–269 (LRLALGPQWAAEG) are Periplasmic-facing. The helical transmembrane segment at 270-290 (VFMLFAVLFTFIGAQFIGMGL) threads the bilayer. Topologically, residues 291-327 (LGEYIGRIYNDVRARPRYFVQQVIYPESTPFTEESHQ) are cytoplasmic.

Belongs to the glycosyltransferase 2 family.

The protein resides in the cell inner membrane. It catalyses the reaction UDP-4-deoxy-4-formamido-beta-L-arabinose + di-trans,octa-cis-undecaprenyl phosphate = 4-deoxy-4-formamido-alpha-L-arabinopyranosyl di-trans,octa-cis-undecaprenyl phosphate + UDP. It functions in the pathway glycolipid biosynthesis; 4-amino-4-deoxy-alpha-L-arabinose undecaprenyl phosphate biosynthesis; 4-amino-4-deoxy-alpha-L-arabinose undecaprenyl phosphate from UDP-4-deoxy-4-formamido-beta-L-arabinose and undecaprenyl phosphate: step 1/2. Its pathway is bacterial outer membrane biogenesis; lipopolysaccharide biosynthesis. Functionally, catalyzes the transfer of 4-deoxy-4-formamido-L-arabinose from UDP to undecaprenyl phosphate. The modified arabinose is attached to lipid A and is required for resistance to polymyxin and cationic antimicrobial peptides. The protein is Undecaprenyl-phosphate 4-deoxy-4-formamido-L-arabinose transferase of Salmonella dublin (strain CT_02021853).